The chain runs to 336 residues: Ketol-acid reductoisomerase (NADP(+)) (336 aa).

The region spanning 2-181 (AKVYYEKDVM…GATRAGVLET (180 aa)) is the KARI N-terminal Rossmann domain. NADP(+) contacts are provided by residues 25-28 (YGSQ), R48, S52, and 82-85 (DELQ). H107 is a catalytic residue. Position 133 (G133) interacts with NADP(+). The KARI C-terminal knotted domain occupies 182-327 (TFKEETETDL…RQLREMMPFV (146 aa)). Residues D190, E194, E226, and E230 each coordinate Mg(2+). S251 contacts substrate.

Belongs to the ketol-acid reductoisomerase family. The cofactor is Mg(2+).

The catalysed reaction is (2R)-2,3-dihydroxy-3-methylbutanoate + NADP(+) = (2S)-2-acetolactate + NADPH + H(+). The enzyme catalyses (2R,3R)-2,3-dihydroxy-3-methylpentanoate + NADP(+) = (S)-2-ethyl-2-hydroxy-3-oxobutanoate + NADPH + H(+). The protein operates within amino-acid biosynthesis; L-isoleucine biosynthesis; L-isoleucine from 2-oxobutanoate: step 2/4. Its pathway is amino-acid biosynthesis; L-valine biosynthesis; L-valine from pyruvate: step 2/4. Its function is as follows. Involved in the biosynthesis of branched-chain amino acids (BCAA). Catalyzes an alkyl-migration followed by a ketol-acid reduction of (S)-2-acetolactate (S2AL) to yield (R)-2,3-dihydroxy-isovalerate. In the isomerase reaction, S2AL is rearranged via a Mg-dependent methyl migration to produce 3-hydroxy-3-methyl-2-ketobutyrate (HMKB). In the reductase reaction, this 2-ketoacid undergoes a metal-dependent reduction by NADPH to yield (R)-2,3-dihydroxy-isovalerate. The chain is Ketol-acid reductoisomerase (NADP(+)) from Bacillus cytotoxicus (strain DSM 22905 / CIP 110041 / 391-98 / NVH 391-98).